Here is a 204-residue protein sequence, read N- to C-terminus: Elongation factor Ts (204 aa).

Residues 87-90 (TDFV) are involved in Mg(2+) ion dislocation from EF-Tu.

It belongs to the EF-Ts family.

Its subcellular location is the cytoplasm. Its function is as follows. Associates with the EF-Tu.GDP complex and induces the exchange of GDP to GTP. It remains bound to the aminoacyl-tRNA.EF-Tu.GTP complex up to the GTP hydrolysis stage on the ribosome. This is Elongation factor Ts from Frankia alni (strain DSM 45986 / CECT 9034 / ACN14a).